A 181-amino-acid polypeptide reads, in one-letter code: Terminase small subunit (181 aa).

The tract at residues Met1 to Val29 is winged helix-turn-helix (wHTH). Arg31–Gly36 is an ATP binding site. The stretch at Glu52–Val109 forms a coiled coil. The interval Glu110–Phe140 is self-assembly. The segment at Pro141–Ser180 is binding to terminase large subunit.

The protein belongs to the terminase small subunit family. Homodimer. Heterotrimer of two small and one large terminase subunits. The catalytically competent terminase is composed of a tetramer of heterotrimers. The tetramer forms a ring structure large enough to encircle duplex DNA. Host IHFA/IHFB induces bending of viral DNA to facilitate the assembly of the terminase tetramer of heterotrimers. Interacts (via C-terminus) with the terminase large subunit (via N-terminus).

Its subcellular location is the host cytoplasm. The enzyme catalyses ATP + H2O = ADP + phosphate + H(+). In terms of biological role, the small subunit is responsible for the binding to multiple recognition elements within the packaging initiation site cos. The terminase lies at a unique vertex of the procapsid and is composed of two subunits, a small terminase subunit involved in viral DNA recognition (binding to packaging sequence cos), and a large terminase subunit possessing endonucleolytic and ATPase activities (DNA maturation and packaging). The terminase binds, cooperatively with the host factor IHFA/IHFB, to the cos site at the junction of adjacent viral genomes in the concatemeric DNA. The endonuclease activity of the large subunit cleave the viral DNA generating 5'overhangs of 12 bp in length. The terminase remains bound to the left end of the genome to be packaged, forming a stable DNA-terminase complex. In a reaction facilitated by the viral assembly catalyst gpFI, the DNA-terminase complex binds to the portal of the procapsid and the terminase packages the viral DNA into the procapsid until the next cos site on the concatemer reaches the complex ('unit length' packaging). The downstream cos site is then cut generating the mature right end of the genome, the heterotrimer undocks from the DNA-filled head and remains bound to the left end of concatemer's next genome. This is Terminase small subunit (Nu1) from Escherichia phage lambda (Bacteriophage lambda).